A 139-amino-acid polypeptide reads, in one-letter code: von Hippel-Lindau-like protein (139 aa).

A disordered region spans residues 1–22 (MPWRAGNGVGLEAQAGTQEAGP). The interval 54–135 (SRIIICNHSP…GQPVFANITL (82 aa)) is beta-domain.

Belongs to the VHL family. In terms of assembly, interacts via the beta domain with the ODD domain of HIF1A. This interaction is independent of prolyl hydroxylation of HIF1A. As to expression, abundantly expressed in the placenta.

In terms of biological role, functions as a dominant-negative VHL to serve as a protector of HIFalpha. The protein is von Hippel-Lindau-like protein (VHLL) of Homo sapiens (Human).